The primary structure comprises 670 residues: Tyramine beta-hydroxylase (670 aa).

Residues 26–35 are compositionally biased toward basic residues; it reads HHQLAYHHHK. The disordered stretch occupies residues 26-63; it reads HHQLAYHHHKQEQQQQQQQQQQQQAKQKQKQNGVQQGR. Positions 38-61 are enriched in low complexity; the sequence is QQQQQQQQQQQQAKQKQKQNGVQQ. The helical transmembrane segment at 65–81 threads the bilayer; it reads PTFMPVMLLLLMATLLT. Residues 104–220 form the DOMON domain; that stretch reads KEIKLSWMVD…GTMYVVWARG (117 aa). Residue asparagine 235 is glycosylated (N-linked (GlcNAc...) asparagine). Residue tyrosine 281 is part of the active site. 2 cysteine pairs are disulfide-bonded: cysteine 283–cysteine 334 and cysteine 319–cysteine 344. Residues histidine 312 and histidine 313 each contribute to the Cu(2+) site. Residues histidine 382, histidine 461, histidine 463, and methionine 536 each coordinate Cu(2+). Disulfide bonds link cysteine 439–cysteine 552, cysteine 443–cysteine 613, and cysteine 515–cysteine 537. Histidine 461 is a catalytic residue. The N-linked (GlcNAc...) asparagine glycan is linked to asparagine 614.

This sequence belongs to the copper type II ascorbate-dependent monooxygenase family. As to quaternary structure, is most likely a monomer under physiological conditions, although under conditions of high pH and low ionic strength the dimeric form predominates. Both forms are equally active. Cu(2+) serves as cofactor. Present in head and in neurons innervating the oviduct (at protein level).

The protein resides in the membrane. The enzyme catalyses tyramine + L-ascorbate + O2 = (R)-octopamine + L-dehydroascorbate + H2O. In terms of biological role, catalyzes the hydroxylation of tyramine into octopamine, a neurotransmitter involved in ovulation and locomotion. Functions in an amine-mediated Bacc-dependent signaling pathway that negatively regulates acute ethanol sensitivity. Involved in facilitation of nociceptive escape behavior in response to potentially damaging stimuli, such as high temperatures. The sequence is that of Tyramine beta-hydroxylase (Tbh) from Drosophila melanogaster (Fruit fly).